We begin with the raw amino-acid sequence, 420 residues long: UDP-N-acetylglucosamine 1-carboxyvinyltransferase (420 aa).

22-23 (KN) serves as a coordination point for phosphoenolpyruvate. R93 contacts UDP-N-acetyl-alpha-D-glucosamine. The active-site Proton donor is the C117. 2-(S-cysteinyl)pyruvic acid O-phosphothioketal is present on C117. UDP-N-acetyl-alpha-D-glucosamine contacts are provided by D307 and V329.

Belongs to the EPSP synthase family. MurA subfamily.

The protein resides in the cytoplasm. The enzyme catalyses phosphoenolpyruvate + UDP-N-acetyl-alpha-D-glucosamine = UDP-N-acetyl-3-O-(1-carboxyvinyl)-alpha-D-glucosamine + phosphate. It participates in cell wall biogenesis; peptidoglycan biosynthesis. Cell wall formation. Adds enolpyruvyl to UDP-N-acetylglucosamine. This chain is UDP-N-acetylglucosamine 1-carboxyvinyltransferase, found in Marinobacter nauticus (strain ATCC 700491 / DSM 11845 / VT8) (Marinobacter aquaeolei).